The sequence spans 70 residues: Small ribosomal subunit protein bS21 (70 aa).

Belongs to the bacterial ribosomal protein bS21 family.

The chain is Small ribosomal subunit protein bS21 from Delftia acidovorans (strain DSM 14801 / SPH-1).